The following is a 260-amino-acid chain: Dolichol-phosphate mannosyltransferase subunit 1 (260 aa).

An N-acetylalanine modification is found at A2. A phosphoserine mark is found at S3 and S9. 11 residues coordinate GDP-alpha-D-mannose: P32, Y34, E36, I63, D65, D118, A119, D120, R147, R234, and K240. Position 120 (D120) interacts with Mg(2+). D120 is a Mn(2+) binding site.

It belongs to the glycosyltransferase 2 family. Component of the dolichol-phosphate mannose (DPM) synthase complex composed of DPM1, DPM2 and DPM3; within the complex, directly interacts with DPM3. This interaction stabilizes DPM1. Mg(2+) is required as a cofactor. Requires Mn(2+) as cofactor. It depends on Ca(2+) as a cofactor.

It is found in the endoplasmic reticulum. The enzyme catalyses a di-trans,poly-cis-dolichyl phosphate + GDP-alpha-D-mannose = a di-trans,poly-cis-dolichyl beta-D-mannosyl phosphate + GDP. Its pathway is protein modification; protein glycosylation. In terms of biological role, transfers mannose from GDP-mannose to dolichol monophosphate to form dolichol phosphate mannose (Dol-P-Man) which is the mannosyl donor in pathways leading to N-glycosylation, glycosyl phosphatidylinositol membrane anchoring, and O-mannosylation of proteins; catalytic subunit of the dolichol-phosphate mannose (DPM) synthase complex. This is Dolichol-phosphate mannosyltransferase subunit 1 (DPM1) from Homo sapiens (Human).